The chain runs to 459 residues: tRNA modification GTPase MnmE (459 aa).

Residues arginine 22, glutamate 85, and arginine 124 each coordinate (6S)-5-formyl-5,6,7,8-tetrahydrofolate. A TrmE-type G domain is found at 221-380 (GLSTVIVGKP…LEIQIRDLFF (160 aa)). A K(+)-binding site is contributed by asparagine 231. Residues 231 to 236 (NVGKSS), 250 to 256 (TEVAGTT), and 275 to 278 (DTAG) contribute to the GTP site. A Mg(2+)-binding site is contributed by serine 235. K(+)-binding residues include threonine 250, valine 252, and threonine 255. Mg(2+) is bound at residue threonine 256. Lysine 459 contributes to the (6S)-5-formyl-5,6,7,8-tetrahydrofolate binding site.

The protein belongs to the TRAFAC class TrmE-Era-EngA-EngB-Septin-like GTPase superfamily. TrmE GTPase family. As to quaternary structure, homodimer. Heterotetramer of two MnmE and two MnmG subunits. The cofactor is K(+).

It localises to the cytoplasm. Its function is as follows. Exhibits a very high intrinsic GTPase hydrolysis rate. Involved in the addition of a carboxymethylaminomethyl (cmnm) group at the wobble position (U34) of certain tRNAs, forming tRNA-cmnm(5)s(2)U34. This Staphylococcus aureus (strain MW2) protein is tRNA modification GTPase MnmE.